A 722-amino-acid chain; its full sequence is MIYQGKSLSAQLLEDGIVEFKFDAQGSVNKFDQATFEEYIAVVAAINNCSEAKGVIVTSGKSTFIVGADITEFLVSFSQPEDALASWAKKASDVFDSFEDIQLPTIAAINGIALGGGCEMTLACDYRVAATTASIGLPEVKLGLMPGFGGTVRLPRLIGFDNAATWMSTGKAFKPAAALAQGAIDAVVEPENLQAAAISMLKLAIDGKLDWRAKRQPKLEALKLSPTELIMSSTTCKGMIAAKAGKHYPAPMVMINTLIASANLDRTGAMAAENTGFAKLAKTDAATAQIGLFMADQVIKGKAKKASKLATKAVNKAAVLGAGIMGGGIAYQSAYKGTPIIMKDINDQALDLGLTTATGILTKQVERGRMNAKKMAGVLNNITPSLSYDSVKDVDIVVEAVVENPKVKGMVLAEVEGVIGEDAILTSNTSTISIDLLAQSVKRPQNFCGMHFFNPVNKMPLVEVIRGKDTSDETVAAVVAYAAKMGKSPIVVNDCPGFYVNRVLFPYFAGFSQLVLEGADFTAIDKVMEKQFGWPMGPAYLLDVVGVDTADHCTGVMSSGFPTRMKKIDNDPVSTLYANERLGQKNGKGFYDHIKDKRGRPMKVPAPVAYELLGQHCADKKDFSSEEIIARMMIPMVNEVVRCLEEGVVDTAAEADMGLIYGVGFPPFRGGAIRYLETLGLDNFIAMADKYTDLGEIYHVTDGLREMAKSGKSYFTTDVKLA.

The interval 1-189 (MIYQGKSLSA…AQGAIDAVVE (189 aa)) is enoyl-CoA hydratase/isomerase. Asp-296 provides a ligand contact to substrate. Positions 311-722 (TKAVNKAAVL…SYFTTDVKLA (412 aa)) are 3-hydroxyacyl-CoA dehydrogenase. Residues Met-325, Asp-344, 401-403 (VVE), Lys-408, and Ser-430 each bind NAD(+). The active-site For 3-hydroxyacyl-CoA dehydrogenase activity is the His-451. NAD(+) is bound at residue Asn-454. Substrate is bound by residues Asn-501 and Tyr-661.

This sequence in the N-terminal section; belongs to the enoyl-CoA hydratase/isomerase family. It in the C-terminal section; belongs to the 3-hydroxyacyl-CoA dehydrogenase family. Heterotetramer of two alpha chains (FadB) and two beta chains (FadA).

It catalyses the reaction a (3S)-3-hydroxyacyl-CoA + NAD(+) = a 3-oxoacyl-CoA + NADH + H(+). The enzyme catalyses a (3S)-3-hydroxyacyl-CoA = a (2E)-enoyl-CoA + H2O. It carries out the reaction a 4-saturated-(3S)-3-hydroxyacyl-CoA = a (3E)-enoyl-CoA + H2O. The catalysed reaction is (3S)-3-hydroxybutanoyl-CoA = (3R)-3-hydroxybutanoyl-CoA. It catalyses the reaction a (3Z)-enoyl-CoA = a 4-saturated (2E)-enoyl-CoA. The enzyme catalyses a (3E)-enoyl-CoA = a 4-saturated (2E)-enoyl-CoA. It participates in lipid metabolism; fatty acid beta-oxidation. Its function is as follows. Involved in the aerobic and anaerobic degradation of long-chain fatty acids via beta-oxidation cycle. Catalyzes the formation of 3-oxoacyl-CoA from enoyl-CoA via L-3-hydroxyacyl-CoA. It can also use D-3-hydroxyacyl-CoA and cis-3-enoyl-CoA as substrate. The protein is Fatty acid oxidation complex subunit alpha of Colwellia psychrerythraea (strain 34H / ATCC BAA-681) (Vibrio psychroerythus).